A 429-amino-acid chain; its full sequence is Probable M18 family aminopeptidase 2 (429 aa).

Residues H82, H156, and H401 each coordinate Zn(2+).

The protein belongs to the peptidase M18 family. The cofactor is Zn(2+).

This Pseudomonas putida (strain GB-1) protein is Probable M18 family aminopeptidase 2.